We begin with the raw amino-acid sequence, 481 residues long: Alpha-ketoglutaric semialdehyde dehydrogenase 1 (481 aa).

NADP(+) is bound by residues 154 to 155, 178 to 181, and 231 to 232; these read WN, KAPE, and GS. Residue glutamate 253 is the Proton acceptor of the active site. Position 254 (leucine 254) interacts with NADP(+). Catalysis depends on cysteine 287, which acts as the Nucleophile. Glutamate 384 is an NADP(+) binding site.

The protein belongs to the aldehyde dehydrogenase family. As to quaternary structure, homotetramer.

It carries out the reaction 2,5-dioxopentanoate + NADP(+) + H2O = 2-oxoglutarate + NADPH + 2 H(+). The enzyme catalyses 2,5-dioxopentanoate + NAD(+) + H2O = 2-oxoglutarate + NADH + 2 H(+). The catalysed reaction is succinate semialdehyde + NAD(+) + H2O = succinate + NADH + 2 H(+). Catalyzes the NAD(P)(+)-dependent oxidation of alpha-ketoglutaric semialdehyde (alphaKGSA) to alpha-ketoglutarate. Is involved in a degradation pathway of L-arabinose that allows A.brasilense to grow on L-arabinose as a sole carbon source. Prefers NAD(+) to NADP(+) as a cosubstrate. Displays broad substrate specificity: exhibits the highest activity with alphaKGSA and succinic semialdehyde as substrates, but to a lesser extent, is also active with glutaraldehyde, benzaldehyde, and a number of aldehydes from C3 to C8. This Azospirillum brasilense protein is Alpha-ketoglutaric semialdehyde dehydrogenase 1 (araE).